Reading from the N-terminus, the 607-residue chain is Isocitrate dehydrogenase kinase/phosphatase (607 aa).

Residues 328–334 (APGIKGL) and lysine 349 each bind ATP. Aspartate 384 is a catalytic residue.

This sequence belongs to the AceK family.

It localises to the cytoplasm. The enzyme catalyses L-seryl-[isocitrate dehydrogenase] + ATP = O-phospho-L-seryl-[isocitrate dehydrogenase] + ADP + H(+). Functionally, bifunctional enzyme which can phosphorylate or dephosphorylate isocitrate dehydrogenase (IDH) on a specific serine residue. This is a regulatory mechanism which enables bacteria to bypass the Krebs cycle via the glyoxylate shunt in response to the source of carbon. When bacteria are grown on glucose, IDH is fully active and unphosphorylated, but when grown on acetate or ethanol, the activity of IDH declines drastically concomitant with its phosphorylation. This chain is Isocitrate dehydrogenase kinase/phosphatase, found in Cupriavidus metallidurans (strain ATCC 43123 / DSM 2839 / NBRC 102507 / CH34) (Ralstonia metallidurans).